Consider the following 369-residue polypeptide: Homoserine O-succinyltransferase (369 aa).

The AB hydrolase-1 domain occupies 49–328; it reads NAVFICHALT…RFDSTQSARM (280 aa). Ser154 serves as the catalytic Nucleophile. Arg224 provides a ligand contact to substrate. Active-site residues include Asp317 and His350. Position 351 (Asp351) interacts with substrate.

Belongs to the AB hydrolase superfamily. MetX family. As to quaternary structure, homodimer.

It localises to the cytoplasm. It catalyses the reaction L-homoserine + succinyl-CoA = O-succinyl-L-homoserine + CoA. It participates in amino-acid biosynthesis; L-methionine biosynthesis via de novo pathway; O-succinyl-L-homoserine from L-homoserine: step 1/1. Functionally, transfers a succinyl group from succinyl-CoA to L-homoserine, forming succinyl-L-homoserine. This chain is Homoserine O-succinyltransferase, found in Nocardioides sp. (strain ATCC BAA-499 / JS614).